The following is a 125-amino-acid chain: Protein ELF4-LIKE 1 (125 aa).

Polar residues predominate over residues methionine 1–methionine 18. The segment at methionine 1–alanine 28 is disordered.

It belongs to the EARLY FLOWERING 4 family. As to quaternary structure, homodimer.

The protein localises to the nucleus. In terms of biological role, component of the central CCA1/LHY-TOC1 feedback loop in the circadian clock that promotes clock accuracy and is required for sustained rhythms in the absence of daily light/dark cycles. The sequence is that of Protein ELF4-LIKE 1 (EFL1) from Arabidopsis thaliana (Mouse-ear cress).